A 195-amino-acid polypeptide reads, in one-letter code: Nicotinamide riboside kinase 2 (195 aa).

9–17 provides a ligand contact to ATP; sequence GVTNGGKTT. Positions 16 and 35 each coordinate Mg(2+). Catalysis depends on D35, which acts as the Proton acceptor. Substrate contacts are provided by residues 35-38 and 54-55; these read DDFF and WD. R130 is an ATP binding site. Substrate is bound by residues R131 and 136-137; that span reads YM. Residues 134–136 and 174–176 contribute to the ATP site; these read RTY and KSP.

The protein belongs to the uridine kinase family. NRK subfamily. In terms of assembly, monomer. Interacts with ITGB1 alone or when associated with alpha-7, but not with alpha-5. As to expression, expressed in skeletal muscle (at protein level).

It catalyses the reaction beta-nicotinamide D-riboside + ATP = beta-nicotinamide D-ribonucleotide + ADP + H(+). The enzyme catalyses beta-D-ribosylnicotinate + ATP = nicotinate beta-D-ribonucleotide + ADP + H(+). The protein operates within cofactor biosynthesis; NAD(+) biosynthesis. Functionally, catalyzes the phosphorylation of nicotinamide riboside (NR) and nicotinic acid riboside (NaR) to form nicotinamide mononucleotide (NMN) and nicotinic acid mononucleotide (NaMN). Reduces laminin matrix deposition and cell adhesion to laminin, but not to fibronectin. Involved in the regulation of PXN at the protein level and of PXN tyrosine phosphorylation. May play a role in the regulation of terminal myogenesis. In Mus musculus (Mouse), this protein is Nicotinamide riboside kinase 2 (Nmrk2).